The following is a 419-amino-acid chain: Histidine--tRNA ligase (419 aa).

The protein belongs to the class-II aminoacyl-tRNA synthetase family.

Its subcellular location is the cytoplasm. The enzyme catalyses tRNA(His) + L-histidine + ATP = L-histidyl-tRNA(His) + AMP + diphosphate + H(+). This chain is Histidine--tRNA ligase, found in Pyrobaculum aerophilum (strain ATCC 51768 / DSM 7523 / JCM 9630 / CIP 104966 / NBRC 100827 / IM2).